A 237-amino-acid polypeptide reads, in one-letter code: Phosphoribosylaminoimidazole-succinocarboxamide synthase (237 aa).

It belongs to the SAICAR synthetase family.

It catalyses the reaction 5-amino-1-(5-phospho-D-ribosyl)imidazole-4-carboxylate + L-aspartate + ATP = (2S)-2-[5-amino-1-(5-phospho-beta-D-ribosyl)imidazole-4-carboxamido]succinate + ADP + phosphate + 2 H(+). Its pathway is purine metabolism; IMP biosynthesis via de novo pathway; 5-amino-1-(5-phospho-D-ribosyl)imidazole-4-carboxamide from 5-amino-1-(5-phospho-D-ribosyl)imidazole-4-carboxylate: step 1/2. The sequence is that of Phosphoribosylaminoimidazole-succinocarboxamide synthase from Enterococcus faecalis (strain ATCC 700802 / V583).